Here is a 120-residue protein sequence, read N- to C-terminus: MKKLTKTHSHRQQKLASIINEALIEILRRGKMLDSRLFDCPLTITKVIVTADLKIANCYFLPFNTKLTIDEIMDALNNSKNAIRNFITNKINMKFSPDIRFHYDHGFDNAIKVAHLLKDL.

The protein belongs to the RbfA family. As to quaternary structure, monomer. Binds 30S ribosomal subunits, but not 50S ribosomal subunits or 70S ribosomes.

It is found in the cytoplasm. In terms of biological role, one of several proteins that assist in the late maturation steps of the functional core of the 30S ribosomal subunit. Associates with free 30S ribosomal subunits (but not with 30S subunits that are part of 70S ribosomes or polysomes). Required for efficient processing of 16S rRNA. May interact with the 5'-terminal helix region of 16S rRNA. In Rickettsia conorii (strain ATCC VR-613 / Malish 7), this protein is Ribosome-binding factor A.